A 731-amino-acid chain; its full sequence is Golgin subfamily A member 5 (731 aa).

At Ser2 the chain carries N-acetylserine. Residues 2–698 (SWFVDLAGKA…IFLRRYPIAR (697 aa)) lie on the Cytoplasmic side of the membrane. Arg89 bears the Dimethylated arginine mark. The segment at 93–222 (EASHPVENAS…PTPNDDGKSH (130 aa)) is disordered. A Phosphoserine modification is found at Ser116. Residues 134-146 (PTGRVEIRKEKGK) show a composition bias toward basic and acidic residues. Positions 147 to 167 (TPVFQSSQTSSVSSVNPSVTT) are enriched in low complexity. Residues 173–188 (ENSFGSQTHEAASNSD) are compositionally biased toward polar residues. Residues 189–199 (SSHEGQEESSK) show a composition bias toward basic and acidic residues. The stretch at 216–632 (NDDGKSHELS…EQQMNSASGS (417 aa)) forms a coiled coil. The chain crosses the membrane as a helical; Anchor for type IV membrane protein span at residues 699–719 (VFVIIYMALLHLWVMIVLLTY). Residues 720-731 (TPEMHHDQPYGK) lie on the Lumenal side of the membrane.

As to quaternary structure, homodimer. Interacts with RAB1A that has been activated by GTP-binding, and possibly also with OCRL1. Interacts with isoform CASP of CUX1. Post-translationally, highly phosphorylated during mitosis. Phosphorylation is barely detectable during interphase. Ubiquitous. Highly expressed in seminiferous tubules and Leydig cells in testis, and detected at much lower levels in the other tissues tested. Expression is very low or not detectable in spermatozoa.

Its subcellular location is the golgi apparatus membrane. Involved in maintaining Golgi structure. Stimulates the formation of Golgi stacks and ribbons. Involved in intra-Golgi retrograde transport. The sequence is that of Golgin subfamily A member 5 (GOLGA5) from Homo sapiens (Human).